The following is an 82-amino-acid chain: MDKKILSLRIVMDDEMETKFYEIKKELGLSSNAEVVRFLVNRFYKELVKKGGLAAVLLSNFANLVSTDWNIVESLGVFPIFG.

This is an uncharacterized protein from Archaeoglobus fulgidus (strain ATCC 49558 / DSM 4304 / JCM 9628 / NBRC 100126 / VC-16).